Consider the following 165-residue polypeptide: Protein SprT (165 aa).

Positions R19 to V163 constitute a SprT-like domain. Position 78 (H78) interacts with Zn(2+). E79 is an active-site residue. Residue H82 coordinates Zn(2+).

This sequence belongs to the SprT family. Requires Zn(2+) as cofactor.

It is found in the cytoplasm. The sequence is that of Protein SprT from Enterobacter sp. (strain 638).